The primary structure comprises 770 residues: Protein PAT1 homolog 1 (770 aa).

The interval 1-26 is disordered; the sequence is MFRYESLEDCPLDEDEDAFQGLGEED. The region A; interaction with DDX6/RCK stretch occupies residues 1–84; the sequence is MFRYESLEDC…EMDLLGDHEE (84 aa). The involved in nuclear foci localization stretch occupies residues 1 to 397; sequence MFRYESLEDC…HRSSHQDHLR (397 aa). A compositionally biased stretch (acidic residues) spans 7–26; it reads LEDCPLDEDEDAFQGLGEED. The interval 85 to 388 is region N; interaction with decapping machinery; that stretch reads NLAERLSKMV…LNGAGDRGSH (304 aa). The short motif at 86–95 is the Nuclear export signal element; the sequence is LAERLSKMVI. A Phosphoserine modification is found at Ser-177. Position 178 is a phosphothreonine (Thr-178). 2 positions are modified to phosphoserine: Ser-179 and Ser-184. Residue Thr-194 is modified to Phosphothreonine. Residues Arg-217, Arg-223, and Arg-263 each carry the asymmetric dimethylarginine modification. The tract at residues 223-397 is involved in RNA-binding; sequence RYPAPYGERM…HRSSHQDHLR (175 aa). Ser-278 carries the phosphoserine modification. The residue at position 284 (Arg-284) is an Asymmetric dimethylarginine. Low complexity predominate over residues 314 to 323; it reads GFRAFFSAPP. Disordered stretches follow at residues 314-344 and 360-399; these read GFRA…QNLR and QHRR…LRKD. The span at 324 to 337 shows a compositional bias: pro residues; sequence SATPPPQQHPPGPG. A compositionally biased stretch (low complexity) spans 367-380; it reads QRQQQNRSQHRNLN. Arg-385 carries the post-translational modification Omega-N-methylarginine. The span at 385–399 shows a compositional bias: basic and acidic residues; the sequence is RGSHRSSHQDHLRKD. The region H stretch occupies residues 389-448; the sequence is RSSHQDHLRKDPYANLMLQREKDWVSKIQMMQLQSTDPYLDDFYYQNYFEKLEKLSAAEE. Residues 398–770 form an involved in nuclear speckle localization region; the sequence is KDPYANLMLQ…TKLQLVQGIR (373 aa). The tract at residues 449-770 is region C; sequence IQGDGPKKER…TKLQLVQGIR (322 aa).

It belongs to the PAT1 family. Interacts (via region A) with DDX6/RCK. Interacts (via region H and region C) with LSM1 and LSM4. Interacts (via region N) with DCP1A, DCP2, EDC3, EDC4 and XRN1. Interacts with the CCR4-NOT complex. Interacts with the Lsm-containing SMN-Sm protein complex. Interacts with EIF4ENIF1/4E-T. As to expression, ubiquitous.

The protein localises to the cytoplasm. The protein resides in the P-body. Its subcellular location is the nucleus. It is found in the PML body. It localises to the nucleus speckle. In terms of biological role, RNA-binding protein involved in deadenylation-dependent decapping of mRNAs, leading to the degradation of mRNAs. Acts as a scaffold protein that connects deadenylation and decapping machinery. Required for cytoplasmic mRNA processing body (P-body) assembly. Functionally, (Microbial infection) In case of infection, required for translation and replication of hepatitis C virus (HCV). The sequence is that of Protein PAT1 homolog 1 (PATL1) from Homo sapiens (Human).